The following is a 113-amino-acid chain: Nitrogenase-stabilizing/protective protein NifW (113 aa).

Belongs to the NifW family. As to quaternary structure, homotrimer; associates with NifD.

Its function is as follows. May protect the nitrogenase Fe-Mo protein from oxidative damage. The polypeptide is Nitrogenase-stabilizing/protective protein NifW (Polaromonas naphthalenivorans (strain CJ2)).